The sequence spans 162 residues: Larval cuticle protein F1 (162 aa).

A run of 4 repeats spans residues 27–30 (AAPV), 43–46 (AAPV), 59–62 (AAPV), and 75–78 (AAPA).

Functionally, component of the larval cuticle. This chain is Larval cuticle protein F1, found in Tenebrio molitor (Yellow mealworm beetle).